A 241-amino-acid polypeptide reads, in one-letter code: Fatty acid metabolism regulator protein (241 aa).

The HTH gntR-type domain maps to 11-79 (QSPAALAEEY…HGKPTKVNNI (69 aa)). The segment at residues 39–58 (ERDLADKIGVTRTTLREVLQ) is a DNA-binding region (H-T-H motif).

As to quaternary structure, homodimer.

The protein resides in the cytoplasm. Multifunctional regulator of fatty acid metabolism. This is Fatty acid metabolism regulator protein from Haemophilus influenzae (strain PittEE).